The chain runs to 275 residues: Large ribosomal subunit protein uL2 (275 aa).

Residues 38-53 are compositionally biased toward polar residues; it reads SSKAGRNNNGRITTRH. Disordered stretches follow at residues 38-59 and 224-257; these read SSKAGRNNNGRITTRHQGGGHK and AMNPIDHPHGGGEGRTAAGRDPVSPWGTPTKGFR.

Belongs to the universal ribosomal protein uL2 family. As to quaternary structure, part of the 50S ribosomal subunit. Forms a bridge to the 30S subunit in the 70S ribosome.

One of the primary rRNA binding proteins. Required for association of the 30S and 50S subunits to form the 70S ribosome, for tRNA binding and peptide bond formation. It has been suggested to have peptidyltransferase activity; this is somewhat controversial. Makes several contacts with the 16S rRNA in the 70S ribosome. The sequence is that of Large ribosomal subunit protein uL2 from Burkholderia multivorans (strain ATCC 17616 / 249).